Reading from the N-terminus, the 245-residue chain is Ribosomal RNA small subunit methyltransferase G (245 aa).

S-adenosyl-L-methionine contacts are provided by residues G90, L95, 140 to 141 (AE), and R158.

The protein belongs to the methyltransferase superfamily. RNA methyltransferase RsmG family.

Its subcellular location is the cytoplasm. Functionally, specifically methylates the N7 position of guanine in position 518 of 16S rRNA. This chain is Ribosomal RNA small subunit methyltransferase G, found in Mycobacterium leprae (strain TN).